Here is a 198-residue protein sequence, read N- to C-terminus: Virion infectivity factor (198 aa).

The tract at residues 1–31 (MERTLQSVVGRRRGSSNRGRGKNSLISTPSY) is disordered. Positions 10–21 (GRRRGSSNRGRG) are enriched in basic residues.

Its subcellular location is the host cytoplasm. It is found in the virion. Functionally, determines virus infectivity. The polypeptide is Virion infectivity factor (vif) (Bovine immunodeficiency virus (strain R29) (BIV)).